The following is a 229-amino-acid chain: Potassium/proton antiporter CemA (229 aa).

Transmembrane regions (helical) follow at residues 7-27 (LIPL…SLSF), 114-134 (IICF…LVIL), 154-174 (ILLL…ELMI), and 189-209 (IISG…KYWI).

This sequence belongs to the CemA family.

It localises to the plastid. Its subcellular location is the chloroplast inner membrane. The catalysed reaction is K(+)(in) + H(+)(out) = K(+)(out) + H(+)(in). In terms of biological role, contributes to K(+)/H(+) antiport activity by supporting proton efflux to control proton extrusion and homeostasis in chloroplasts in a light-dependent manner to modulate photosynthesis. Prevents excessive induction of non-photochemical quenching (NPQ) under continuous-light conditions. Indirectly promotes efficient inorganic carbon uptake into chloroplasts. The protein is Potassium/proton antiporter CemA of Fagus sylvatica (Beechnut).